Reading from the N-terminus, the 30-residue chain is Protein ScvA (30 aa).

Residues 1–30 (MERQNVQQQRGKDQRPQRPGASNPRRPNQR) are disordered.

In terms of biological role, might be involved in DNA-binding; the protein binds DNA in gel-shift assays and immunogold electron microscopy shows labelling of condensed chromatin. This Coxiella burnetii (strain RSA 493 / Nine Mile phase I) protein is Protein ScvA (scvA).